A 273-amino-acid polypeptide reads, in one-letter code: MAIVKCKPTSAGRRHVVKIVNPELHKGKPYAPLLDTKSKTGGRNNLGRITTRHIGGGHKQHYRLIDFKRNKLDIPAVVERLEYDPNRSANIALVLYKDGERRYILAPKGLSAGDQIQAGVNAPIKVGNALPMRNIPVGSTVHNVELKPGKGGQIARSAGSYVQIIAREGNYVTLRLRSGEMRKVLAECTATIGEVGNSEHMLRVLGKAGANRWRGVRPTVRGTAMNPVDHPHGGGEGRNFGKHPVSPWGVQTKGKKTRHNKRTDKYIVRRRGK.

Residues 221-273 (RGTAMNPVDHPHGGGEGRNFGKHPVSPWGVQTKGKKTRHNKRTDKYIVRRRGK) form a disordered region. A compositionally biased stretch (basic residues) spans 253 to 273 (KGKKTRHNKRTDKYIVRRRGK).

This sequence belongs to the universal ribosomal protein uL2 family. Part of the 50S ribosomal subunit. Forms a bridge to the 30S subunit in the 70S ribosome.

In terms of biological role, one of the primary rRNA binding proteins. Required for association of the 30S and 50S subunits to form the 70S ribosome, for tRNA binding and peptide bond formation. It has been suggested to have peptidyltransferase activity; this is somewhat controversial. Makes several contacts with the 16S rRNA in the 70S ribosome. This chain is Large ribosomal subunit protein uL2, found in Mannheimia succiniciproducens (strain KCTC 0769BP / MBEL55E).